Reading from the N-terminus, the 81-residue chain is MDSLTSAASVLAAALAVGLAAIGPGIGQGSAAGQAVEGIARQPEAEGKIRGTLLLSLAFMEALTIYGLVVALVLLFANPFA.

2 helical membrane passes run 7–27 (AASV…PGIG) and 57–77 (LAFM…LLFA).

Belongs to the ATPase C chain family. In terms of assembly, F-type ATPases have 2 components, F(1) - the catalytic core - and F(0) - the membrane proton channel. F(1) has five subunits: alpha(3), beta(3), gamma(1), delta(1), epsilon(1). F(0) has four main subunits: a(1), b(1), b'(1) and c(10-14). The alpha and beta chains form an alternating ring which encloses part of the gamma chain. F(1) is attached to F(0) by a central stalk formed by the gamma and epsilon chains, while a peripheral stalk is formed by the delta, b and b' chains.

It localises to the cellular thylakoid membrane. F(1)F(0) ATP synthase produces ATP from ADP in the presence of a proton or sodium gradient. F-type ATPases consist of two structural domains, F(1) containing the extramembraneous catalytic core and F(0) containing the membrane proton channel, linked together by a central stalk and a peripheral stalk. During catalysis, ATP synthesis in the catalytic domain of F(1) is coupled via a rotary mechanism of the central stalk subunits to proton translocation. Its function is as follows. Key component of the F(0) channel; it plays a direct role in translocation across the membrane. A homomeric c-ring of between 10-14 subunits forms the central stalk rotor element with the F(1) delta and epsilon subunits. The sequence is that of ATP synthase subunit c from Synechococcus elongatus (strain ATCC 33912 / PCC 7942 / FACHB-805) (Anacystis nidulans R2).